We begin with the raw amino-acid sequence, 898 residues long: MRKGVPKDPEIADLFYKDDPEEIFVGLHEIGHGSFGAVYFATNSHTNEVVAVKKMSYSGKQTNEKWQDIIKEVKFLQQLKHPNTIEYKGCYLKEHTAWLVMEYCLGSASDMLEVHKKPLQEVEIAAITHGALQGLAYLHSHCKIHRDIKAGNILLTEPGQVKLADFGSASIVSPANSFVGTPYWMAPEVILAMDEGQYDGKVDVWSLGITCIELAERKPPLFNMNAMSALYHIAQNDSPTLQSNEWSDSFRGFVDYCLQKIPQERPSSADLLRHDFVRRDRPPRVLIDLIQRTKDAVRELDNLQYRKMKKILFQETRNGPLTESQEEEEDSEHGSNLSRKMDSLGSNHSIPSMSVSTGSQSSSVSSMQEVLDESSPELVMMHSDESTVNSTSSVVQKKDHVFIRDEVGHRDRRPEVRPTQSVQNQALHYRNRERFATIKSASLVTRQIHEHEQENELREQMSGYKRMRRQHQKQLIALENKLKAEMDEHRLKLQKEVETHANNSSIELEKLAKKQVAVMEKEAKTAAADEKKFQQQILAQQKKDMATFLESQKKQYKLCKEKIKEEMNEDHSTPKKEKQERISKHKENLQHTQAEEEAHLLSQQRLYYDKNCRFFKRKTMIKRHELEQQNIREELNKKRTQKEMEHAMLIRHDESTRELEYRQLHTLQKLRMDLIRLQHQTELENQLEYNKRRERELHRKHFMELRQQPKNLKAMEMQIKKQFQDTCKVQTKQYKALKNHQLEVTPKSEHKTILKSLKDEQTRKLAILAEQYEQSINEMMASQALRRDEAQEAECQALRLQLQQEMELLNAYQSKIKMQTEAQHERELQKLEQRVSLRRAHLEQKIEEELAALQKERSERIKFLLERQEREIETFDMESLRMGFGNLVTLDYPKEDYR.

One can recognise a Protein kinase domain in the interval 24-277 (FVGLHEIGHG…SADLLRHDFV (254 aa)). Residues 30 to 38 (IGHGSFGAV) and K53 contribute to the ATP site. Residue D147 is the Proton acceptor of the active site. The tract at residues 316–374 (TRNGPLTESQEEEEDSEHGSNLSRKMDSLGSNHSIPSMSVSTGSQSSSVSSMQEVLDES) is disordered. Polar residues predominate over residues 334 to 351 (GSNLSRKMDSLGSNHSIP). A compositionally biased stretch (low complexity) spans 352 to 368 (SMSVSTGSQSSSVSSMQ). 3 coiled-coil regions span residues 452-502 (EQEN…THAN), 548-649 (FLES…HAML), and 754-875 (LKSL…IETF). A disordered region spans residues 565–596 (EEMNEDHSTPKKEKQERISKHKENLQHTQAEE).

The protein belongs to the protein kinase superfamily. STE Ser/Thr protein kinase family. STE20 subfamily.

The protein localises to the cytoplasm. It is found in the cell membrane. Its subcellular location is the membrane raft. It localises to the lipid droplet. The catalysed reaction is L-seryl-[protein] + ATP = O-phospho-L-seryl-[protein] + ADP + H(+). It carries out the reaction L-threonyl-[protein] + ATP = O-phospho-L-threonyl-[protein] + ADP + H(+). Its function is as follows. Serine/threonine-protein kinase that acts as a regulator of the p38/MAPK14 stress-activated MAPK cascade and of the MAPK8/JNK cascade. In response to DNA damage, involved in the G2/M transition DNA damage checkpoint by activating the p38/MAPK14 stress-activated MAPK cascade, probably by mediating phosphorylation of upstream MAP kinase kinases. Inhibits basal activity of the MAPK8/JNK cascade. The protein is Serine/threonine-protein kinase TAO3 (TAOK3) of Gallus gallus (Chicken).